The chain runs to 332 residues: 2,3-diketo-L-gulonate reductase (332 aa).

H44 acts as the Proton donor in catalysis. NAD(+) contacts are provided by residues 168-174 (ITMVDMS), 224-225 (WK), and 304-306 (GHE).

It belongs to the LDH2/MDH2 oxidoreductase family. DlgD subfamily. As to quaternary structure, homodimer.

The protein resides in the cytoplasm. It catalyses the reaction 3-dehydro-L-gulonate + NAD(+) = 2,3-dioxo-L-gulonate + NADH + H(+). It carries out the reaction 3-dehydro-L-gulonate + NADP(+) = 2,3-dioxo-L-gulonate + NADPH + H(+). Catalyzes the reduction of 2,3-diketo-L-gulonate in the presence of NADH, to form 3-keto-L-gulonate. This chain is 2,3-diketo-L-gulonate reductase, found in Salmonella paratyphi C (strain RKS4594).